Consider the following 161-residue polypeptide: Chaperone protein dnaJ 11, chloroplastic (161 aa).

The span at Met-1 to Pro-18 shows a compositional bias: low complexity. The segment at Met-1–Arg-31 is disordered. The transit peptide at Met-1–Leu-36 directs the protein to the chloroplast. A J domain is found at Ser-65–Met-133.

It belongs to the DnaJ family. C/III subfamily. Expressed in roots, stems, leaves, flowers and developing siliques.

Its subcellular location is the plastid. It is found in the chloroplast stroma. In terms of biological role, plays a continuous role in plant development probably in the structural organization of compartments. The polypeptide is Chaperone protein dnaJ 11, chloroplastic (ATJ11) (Arabidopsis thaliana (Mouse-ear cress)).